The following is a 432-amino-acid chain: D-amino acid dehydrogenase (432 aa).

FAD is bound at residue 3 to 17 (VVVLGSGVVGVASAW).

It belongs to the DadA oxidoreductase family. Requires FAD as cofactor.

The catalysed reaction is a D-alpha-amino acid + A + H2O = a 2-oxocarboxylate + AH2 + NH4(+). The protein operates within amino-acid degradation; D-alanine degradation; NH(3) and pyruvate from D-alanine: step 1/1. Functionally, oxidative deamination of D-amino acids. This is D-amino acid dehydrogenase from Cronobacter sakazakii (strain ATCC BAA-894) (Enterobacter sakazakii).